We begin with the raw amino-acid sequence, 431 residues long: UPF0597 protein LCA_0156 (431 aa).

It belongs to the UPF0597 family.

The protein is UPF0597 protein LCA_0156 of Latilactobacillus sakei subsp. sakei (strain 23K) (Lactobacillus sakei subsp. sakei).